Consider the following 257-residue polypeptide: uncharacterized protein (257 aa).

Positions 1–22 (MGYLKRFALYISVMILIFAIAG) are cleaved as a signal peptide. C23 carries N-palmitoyl cysteine lipidation. Residue C23 is the site of S-diacylglycerol cysteine attachment.

Belongs to the staphylococcal tandem lipoprotein family.

It is found in the cell membrane. This is an uncharacterized protein from Staphylococcus aureus (strain USA300).